Here is a 360-residue protein sequence, read N- to C-terminus: MIIYATAVQTINSFVRLESLKEVYGLIWIFVPIFSLVLGIITGVLVIVWLEREISAGIQQRIGPEYAGPLGILQALADGTKLLFKENLRPSRGNPPLFSIGPSIAVISILLSYSVIPFSNHLVLADLNIGIFLWIAISSIAPIGLLMSGYGSNNKYSFLGGLRAAAQSISYEIPLTLCVLSISLLSNSLSTVDIVEAQSKYGFWGWNLWRQPIGFIIFLISSLAECERLPFDLPEAEEELIAGYQTEYSGIKFGLFYVASYLNLLISSLFVTVLYLGGWNISIPYISILELFQRDQIFGTTIGIFITLAKTYLFLFISIATRWTLPRLRMDQLLNLGWKFLLPISLGNLLLTTSFQLFSL.

Helical transmembrane passes span 27-47 (IWIF…VLVI), 98-118 (FSIG…VIPF), 129-149 (IGIF…LMSG), 165-185 (AAQS…ISLL), 203-223 (FWGW…ISSL), 248-268 (YSGI…LISS), 269-289 (LFVT…ISIL), 297-317 (IFGT…FLFI), and 340-360 (FLLP…LFSL).

The protein belongs to the complex I subunit 1 family. As to quaternary structure, NDH is composed of at least 16 different subunits, 5 of which are encoded in the nucleus.

It is found in the plastid. It localises to the chloroplast thylakoid membrane. The catalysed reaction is a plastoquinone + NADH + (n+1) H(+)(in) = a plastoquinol + NAD(+) + n H(+)(out). It carries out the reaction a plastoquinone + NADPH + (n+1) H(+)(in) = a plastoquinol + NADP(+) + n H(+)(out). NDH shuttles electrons from NAD(P)H:plastoquinone, via FMN and iron-sulfur (Fe-S) centers, to quinones in the photosynthetic chain and possibly in a chloroplast respiratory chain. The immediate electron acceptor for the enzyme in this species is believed to be plastoquinone. Couples the redox reaction to proton translocation, and thus conserves the redox energy in a proton gradient. This is NAD(P)H-quinone oxidoreductase subunit 1, chloroplastic from Nasturtium officinale (Watercress).